The sequence spans 204 residues: Phosphoprotein p30 (204 aa).

Belongs to the asfivirus phosphoprotein p30 family. In terms of assembly, oligomer. Interacts with host HNRNPK. Post-translationally, phosphorylated on serine residues in the 115 N-terminal amino acids.

Its subcellular location is the host cytoplasm. The protein localises to the host nucleus. It localises to the virion. Functionally, modifies the subcellular distribution of heterogeneous nuclear ribonucleoprotein K (HNRNPK) and may contribute to modulate HNRNPK functions related to processing and export of mRNAs during ASFV infection. Necessary for virus internalization. In African swine fever virus (strain Badajoz 1971 Vero-adapted) (Ba71V), this protein is Phosphoprotein p30.